The following is a 231-amino-acid chain: Phosphoglycolate phosphatase (231 aa).

Asp-9 serves as the catalytic Nucleophile. Mg(2+) is bound by residues Asp-9 and Asp-11. Asp-11 functions as the Proton donor in the catalytic mechanism. Position 154 (Lys-154) interacts with substrate. Mg(2+) is bound by residues Asp-177 and Asp-181.

The protein belongs to the archaeal SPP-like hydrolase family. In terms of assembly, homodimer. Mg(2+) is required as a cofactor.

The enzyme catalyses 2-phosphoglycolate + H2O = glycolate + phosphate. Its function is as follows. Catalyzes the dephosphorylation of 2-phosphoglycolate. Has phosphatase activity towards p-nitrophenylphosphate (in vitro). The sequence is that of Phosphoglycolate phosphatase from Pyrococcus horikoshii (strain ATCC 700860 / DSM 12428 / JCM 9974 / NBRC 100139 / OT-3).